Consider the following 127-residue polypeptide: Fluoride-specific ion channel FluC (127 aa).

4 consecutive transmembrane segments (helical) span residues 4–24, 35–55, 68–88, and 96–116; these read SLLA…GLGM, PGTL…IAFF, LLIT…AEVV, and ILWA…MTAA. Na(+)-binding residues include Gly75 and Thr78.

It belongs to the fluoride channel Fluc/FEX (TC 1.A.43) family.

The protein resides in the cell inner membrane. The enzyme catalyses fluoride(in) = fluoride(out). Na(+) is not transported, but it plays an essential structural role and its presence is essential for fluoride channel function. Its function is as follows. Fluoride-specific ion channel. Important for reducing fluoride concentration in the cell, thus reducing its toxicity. The protein is Fluoride-specific ion channel FluC of Pseudomonas putida (strain W619).